Consider the following 994-residue polypeptide: Chloride channel protein 1 (994 aa).

Topologically, residues 1–118 are cytoplasmic; the sequence is MERSQSQQHG…VLRRKLGEDW (118 aa). The segment at 37–61 is disordered; sequence SENGGLQHRPRKDLGPRHNAHPTQI. Residues 119–150 form a helical membrane-spanning segment; that stretch reads IFLVLLGLLMALVSWCMDYVSAKSLQAYKWTY. At 151–158 the chain is on the extracellular side; it reads AQMQPSLP. Residues 159–179 form a helical membrane-spanning segment; that stretch reads LQYLAWVTFPLILILFSALFC. Topologically, residues 180–183 are cytoplasmic; it reads QLIS. Residues 184 to 189 constitute an intramembrane region (note=Loop between two helices); it reads PQAVGS. The short motif at 188–192 is the Selectivity filter part_1 element; that stretch reads GSGIP. Ser189 is a chloride binding site. The segment at residues 190–195 is an intramembrane region (helical); that stretch reads GIPEMK. At 196–208 the chain is on the cytoplasmic side; the sequence is TILRGVVLKEYLT. An intramembrane region (helical) is located at residues 209–224; it reads LKAFVAKVVALTAGLG. Residues 225 to 230 constitute an intramembrane region (note=Loop between two helices); that stretch reads SGIPVG. The Selectivity filter part_2 signature appears at 230–234; it reads GKEGP. An intramembrane region (helical) is located at residues 231 to 246; the sequence is KEGPFVHIASICAAVL. Residues 247–268 are Cytoplasmic-facing; that stretch reads SKFMSMFSGVYEQPYYYTDILT. 2 intramembrane regions (helical) span residues 269–280 and 281–290; these read VGCAVGVGCCFG and TPLGGVLFSI. Over 291–301 the chain is Cytoplasmic; the sequence is EVTSTYFAVRN. A helical membrane pass occupies residues 302–321; it reads YWRGFFAATFSAFVFRVLAV. Residues 322-347 lie on the Extracellular side of the membrane; the sequence is WNKDAVTITALFRTNFRMDFPFDLKE. Residues 348 to 376 traverse the membrane as a helical segment; sequence LPAFAVIGICCGFLGAVFVYLHRQVMLGV. The Cytoplasmic segment spans residues 377 to 390; the sequence is RKHKALSQFLAKHR. The helical transmembrane segment at 391–408 threads the bilayer; sequence LLYPGIVTFVIASLTFPP. Over 409–414 the chain is Extracellular; it reads GMGQFM. An intramembrane region (note=Loop between two helices) is located at residues 415 to 418; that stretch reads AGEL. Positions 419 to 426 form an intramembrane region, helical; it reads MPREAIST. Residues 427 to 457 are Extracellular-facing; that stretch reads LFDNNTWVKHIGDPKSLGQSAVWIHPQVNVV. The segment at residues 458-475 is an intramembrane region (helical); sequence IIILLFFVMKFWMSIVAT. An intramembrane region (note=Loop between two helices) is located at residues 476-482; that stretch reads TMPIPCG. The Selectivity filter part_3 signature appears at 482–486; it reads GGFMP. An intramembrane region (helical) is located at residues 483–498; the sequence is GFMPVFVLGAAFGRLV. Residue Phe484 coordinates chloride. The Extracellular segment spans residues 499 to 521; it reads GEIMAMLFPEGILFDDIIYKILP. The segment at residues 522-538 is an intramembrane region (helical); sequence GGYAVIGAAALTGAVSH. The note=Loop between two helices intramembrane region spans 539 to 540; that stretch reads TV. Residues 541-554 constitute an intramembrane region (helical); the sequence is STAVICFELTGQIA. At 555-557 the chain is on the extracellular side; that stretch reads HIL. An intramembrane region (helical) is located at residues 558–571; that stretch reads PMMVAVILANMVAQ. Residues 572–575 constitute an intramembrane region (note=Loop between two helices); it reads SLQP. Residues 576 to 578 constitute an intramembrane region (helical); the sequence is SLY. Residue Tyr578 coordinates chloride. Residues 579–994 lie on the Cytoplasmic side of the membrane; it reads DSIIQVKKLP…DEEDEDELIL (416 aa). Residues 609-668 form the CBS 1 domain; it reads MVRDVKFVSASCTYGELRNLLQTTTVKTLPLVDSKDSMILLGSVERSELQSLLQRHLCAE. Disordered regions lie at residues 710–769, 880–923, and 965–994; these read EDED…SADQ, TKSG…DGAP, and NLGP…ELIL. Residues 725–741 show a composition bias toward pro residues; it reads TPTPPPPPPPPLPPQFP. The 56-residue stretch at 827–882 folds into the CBS 2 domain; sequence IDQSPFQLVEQTTLHKTHTLFSLLGLHLAYVTSMGKLRGVLALEELQKAIKGHTKS. Ser892 carries the post-translational modification Phosphoserine. Residues 985–994 are compositionally biased toward acidic residues; it reads DEEDEDELIL.

Belongs to the chloride channel (TC 2.A.49) family. ClC-1/CLCN1 subfamily. Homodimer. In terms of tissue distribution, predominantly expressed in skeletal muscles.

Its subcellular location is the cell membrane. The protein localises to the sarcolemma. It localises to the T-tubule. It carries out the reaction chloride(in) = chloride(out). The catalysed reaction is bromide(in) = bromide(out). It catalyses the reaction iodide(out) = iodide(in). The enzyme catalyses thiocyanate(in) = thiocyanate(out). It carries out the reaction nitrate(in) = nitrate(out). Its activity is regulated as follows. Modulated by membrane voltage with depolarization favouring channel opening and hyperpolarization favouring channel closure. Inhibited by acidic pH and ATP binding due to a shift of voltage dependence of common gating to more positive voltages. Inhibited by 9-anthracene-carboxylic acid. Functionally, voltage-gated chloride channel involved in skeletal muscle excitability. Generates most of the plasma membrane chloride conductance in skeletal muscle fibers, stabilizes the resting membrane potential and contributes to the repolarization phase during action potential firing. Forms a homodimeric channel where each subunit has its own ion conduction pathway. Conducts double-barreled currents controlled by two types of gates, two fast glutamate gates that control each subunit independently and a slow common gate that opens and shuts off both subunits simultaneously. Has a significant open probability at muscle resting potential and is further activated upon membrane depolarization. Permeable to small monovalent anions with ion selectivity for chloride &gt; thiocyanate &gt; bromide &gt; nitrate &gt; iodide. This is Chloride channel protein 1 (Clcn1) from Rattus norvegicus (Rat).